The chain runs to 156 residues: ATP synthase subunit b (156 aa).

The helical transmembrane segment at 7-29 (LIGQLIAFALFTWFCVKFVWPPI) threads the bilayer.

The protein belongs to the ATPase B chain family. As to quaternary structure, F-type ATPases have 2 components, F(1) - the catalytic core - and F(0) - the membrane proton channel. F(1) has five subunits: alpha(3), beta(3), gamma(1), delta(1), epsilon(1). F(0) has three main subunits: a(1), b(2) and c(10-14). The alpha and beta chains form an alternating ring which encloses part of the gamma chain. F(1) is attached to F(0) by a central stalk formed by the gamma and epsilon chains, while a peripheral stalk is formed by the delta and b chains.

The protein resides in the cell inner membrane. Functionally, f(1)F(0) ATP synthase produces ATP from ADP in the presence of a proton or sodium gradient. F-type ATPases consist of two structural domains, F(1) containing the extramembraneous catalytic core and F(0) containing the membrane proton channel, linked together by a central stalk and a peripheral stalk. During catalysis, ATP synthesis in the catalytic domain of F(1) is coupled via a rotary mechanism of the central stalk subunits to proton translocation. In terms of biological role, component of the F(0) channel, it forms part of the peripheral stalk, linking F(1) to F(0). The chain is ATP synthase subunit b from Actinobacillus succinogenes (strain ATCC 55618 / DSM 22257 / CCUG 43843 / 130Z).